Reading from the N-terminus, the 397-residue chain is MSLSKTKNPALLAGPGDEAKEKVQAALELLHKFGSAFKVDTAGFSFHPESPECDKIFGAYLKNVKHVPTYSSAKTLTSVGGRILYAATCQYVKLTPVTNLTGCTLWEHGWGQNLKCYHGEGMCRKKNEIEMAATSESGVAALKEGRGAVEINRWGRQVVKITQENYVICMEDLQSRFNQPSANSCGLSFSDSDKARSAMENATELTRSIFSQAKMDHLLFMPICCYCNYGGKMILGRQLCKLTPFSISGTEGLREEDVSPVQAVSVRHPAVFVFQCCNATGGSKGKTSCDFKISHADLLQVLNLVRKMWLEVMGYPMPIHFPRFKWSPSLRVKNALLPEGSVNEDENPFGLDNSEDEEEVVPPSPPSPARKRTRTTVAEVHHKKKKKIVLESSEEDE.

2 residues coordinate Zn(2+): cysteine 116 and histidine 118. Positions 129 to 161 (IEMAATSESGVAALKEGRGAVEINRWGRQVVKI) are flexible loop. Zn(2+) is bound by residues cysteine 169, cysteine 185, cysteine 225, cysteine 227, cysteine 276, and cysteine 289. Residues 335–397 (ALLPEGSVNE…IVLESSEEDE (63 aa)) form a C-terminal arm, DBP binding region. The segment at 338–397 (PEGSVNEDENPFGLDNSEDEEEVVPPSPPSPARKRTRTTVAEVHHKKKKKIVLESSEEDE) is disordered. The span at 342-360 (VNEDENPFGLDNSEDEEEV) shows a compositional bias: acidic residues.

Belongs to the adenoviridae E2A DNA-binding protein family. In terms of assembly, homomultimerizes on viral ssDNA bound to pTP. Forms a initiation complex with viral polymerase, pTP and hosts NFIA and POU2F1/OCT1. Interacts with host SRCAP.

The protein resides in the host nucleus. Its function is as follows. Plays a role in the elongation phase of viral strand displacement replication by unwinding the template in an ATP-independent fashion, employing its capacity to form multimers. Also enhances the rate of initiation. Released from template upon second strand synthesis. Assembles in complex with viral pTP, viral pol, host NFIA and host POU2F1/OCT1 on viral origin of replication. Covers the whole ssDNA genome during synthesis. The complementary strand synthesis induces its relese from DNA template. May inhibit cellular transcription mediated by the interaction between host SRCAP and CBP. In Snake adenovirus serotype 1 (SnAdV-1), this protein is DNA-binding protein.